Reading from the N-terminus, the 249-residue chain is MSSIGTGYDLSVTTFSPDGRVFQVEYATKAVDNSGTVVGIKCKDGIVLGVEKLVTSKMMLEGSNRRIHSVHWHSGLAVAGLAADGRQIVSRAKSEAASYEKVYGEPISVKELADRVASYVHLCTLYWWLRPFGCGVILGGYDRDGPQLYMIEPSGVSYKYFGAALGKGRQAAKTEIEKLKLSELTCREGIVEVAKIIYGVHDEAKDKAFELELSWICDESNRQHQKVPADLLEQAKVAAQAALEEMDAD.

Belongs to the peptidase T1A family. In terms of assembly, the 26S proteasome consists of a 20S proteasome core and two 19S regulatory subunits. The 20S proteasome core is composed of 28 subunits that are arranged in four stacked rings, resulting in a barrel-shaped structure. The two end rings are each formed by seven alpha subunits, and the two central rings are each formed by seven beta subunits. The catalytic chamber with the active sites is on the inside of the barrel.

It is found in the cytoplasm. It localises to the nucleus. The proteasome is a multicatalytic proteinase complex which is characterized by its ability to cleave peptides with Arg, Phe, Tyr, Leu, and Glu adjacent to the leaving group at neutral or slightly basic pH. The proteasome has an ATP-dependent proteolytic activity. The sequence is that of Proteasome subunit alpha type-3 (PAG1) from Oryza sativa subsp. japonica (Rice).